The sequence spans 442 residues: Phosphoglucosamine mutase (442 aa).

The Phosphoserine intermediate role is filled by Ser-98. Residues Ser-98, Asp-236, Asp-238, and Asp-240 each coordinate Mg(2+). Ser-98 bears the Phosphoserine mark.

It belongs to the phosphohexose mutase family. Mg(2+) is required as a cofactor. In terms of processing, activated by phosphorylation.

The enzyme catalyses alpha-D-glucosamine 1-phosphate = D-glucosamine 6-phosphate. Catalyzes the conversion of glucosamine-6-phosphate to glucosamine-1-phosphate. The chain is Phosphoglucosamine mutase from Natranaerobius thermophilus (strain ATCC BAA-1301 / DSM 18059 / JW/NM-WN-LF).